Reading from the N-terminus, the 36-residue chain is Pancreatic polypeptide (36 aa).

Position 36 is a tyrosine amide (Y36).

Belongs to the NPY family.

Its subcellular location is the secreted. Hormone secreted by pancreatic cells that acts as a regulator of pancreatic and gastrointestinal functions. The protein is Pancreatic polypeptide (PPY) of Anser anser anser (Western greylag goose).